Here is a 64-residue protein sequence, read N- to C-terminus: Small ribosomal subunit protein bS18c (64 aa).

This sequence belongs to the bacterial ribosomal protein bS18 family. Part of the 30S ribosomal subunit.

It localises to the plastid. It is found in the chloroplast. The sequence is that of Small ribosomal subunit protein bS18c (rps18) from Bigelowiella natans (Pedinomonas minutissima).